Reading from the N-terminus, the 239-residue chain is MKPLLSLDRVSVSRDGRNVLDKLSLSLAAGERLALIGDNGVGKTTLLRTIVGLEPASGEITAFGINCRNESDFRKIRAKAAYLFQNPDDQLFCPTVIDDVAFGPLNLGLSRQEAMELSNGLLHDLGLGHLAGRITHHLSGGEKRLVSLAAVLAMQPQVLLLDEPTNALDEKHLERMLAILSAQKIAMIIVSHDWEILERLTDRAVVLRNGKLLPAMLHRHSQWSEQVHLHYVEAEGSAL.

Residues 5–234 (LSLDRVSVSR…EQVHLHYVEA (230 aa)) form the ABC transporter domain. 37–44 (GDNGVGKT) is a binding site for ATP.

Belongs to the ABC transporter superfamily.

The protein localises to the cell inner membrane. In terms of biological role, probably part of an ABC transporter complex. Responsible for energy coupling to the transport system. This chain is Putative ABC transporter ATP-binding protein BR1368/BS1330_I1363, found in Brucella suis biovar 1 (strain 1330).